We begin with the raw amino-acid sequence, 273 residues long: Octanoyltransferase (273 aa).

A BPL/LPL catalytic domain is found at 35–254 (DRVPDTCLLL…HLRDILENAE (220 aa)). Residues 73-80 (RGGKITWH), 184-186 (AIG), and 197-199 (GFA) each bind substrate. Cys215 acts as the Acyl-thioester intermediate in catalysis.

The protein belongs to the LipB family.

The protein resides in the cytoplasm. The enzyme catalyses octanoyl-[ACP] + L-lysyl-[protein] = N(6)-octanoyl-L-lysyl-[protein] + holo-[ACP] + H(+). The protein operates within protein modification; protein lipoylation via endogenous pathway; protein N(6)-(lipoyl)lysine from octanoyl-[acyl-carrier-protein]: step 1/2. Its function is as follows. Catalyzes the transfer of endogenously produced octanoic acid from octanoyl-acyl-carrier-protein onto the lipoyl domains of lipoate-dependent enzymes. Lipoyl-ACP can also act as a substrate although octanoyl-ACP is likely to be the physiological substrate. The sequence is that of Octanoyltransferase from Streptomyces griseus subsp. griseus (strain JCM 4626 / CBS 651.72 / NBRC 13350 / KCC S-0626 / ISP 5235).